The chain runs to 286 residues: Transcription initiation factor IIA large subunit (286 aa).

Disordered regions lie at residues 120–145 (NTVE…ADVT), 167–195 (TVEN…KEKE), and 208–236 (KRSA…EGEE). A compositionally biased stretch (basic and acidic residues) spans 175 to 195 (SEKKDDEEKEEDVEKTRKEKE). Residues 214–236 (DTDEVGSELDDSDDDYLISEGEE) are compositionally biased toward acidic residues.

The protein belongs to the TFIIA subunit 1 family. TFIIA is a heterodimer composed of the large TOA1 and a small TOA2 subunits. Interacts with KAP122.

Its subcellular location is the cytoplasm. The protein localises to the nucleus. In terms of biological role, TFIIA is a component of the transcription machinery of RNA polymerase II and implicated in the regulation of basal transcription. Interacts with TBP (the TATA-binding protein). The chain is Transcription initiation factor IIA large subunit (TOA1) from Saccharomyces cerevisiae (strain ATCC 204508 / S288c) (Baker's yeast).